Here is a 261-residue protein sequence, read N- to C-terminus: Potassium/proton antiporter CemA (261 aa).

3 helical membrane passes run 138–158 (IISH…CLIL), 186–206 (ILLV…ELMI), and 221–241 (IISG…KYWI).

The protein belongs to the CemA family.

It localises to the plastid. Its subcellular location is the chloroplast inner membrane. The catalysed reaction is K(+)(in) + H(+)(out) = K(+)(out) + H(+)(in). In terms of biological role, contributes to K(+)/H(+) antiport activity by supporting proton efflux to control proton extrusion and homeostasis in chloroplasts in a light-dependent manner to modulate photosynthesis. Prevents excessive induction of non-photochemical quenching (NPQ) under continuous-light conditions. Indirectly promotes efficient inorganic carbon uptake into chloroplasts. The polypeptide is Potassium/proton antiporter CemA (Cryptomeria japonica (Japanese cedar)).